The primary structure comprises 236 residues: Large ribosomal subunit protein uL2 (236 aa).

The span at 1 to 10 (MGHRITTQSR) shows a compositional bias: polar residues. Disordered regions lie at residues 1–20 (MGHR…YRAP) and 202–236 (GGGG…TGRR). The segment covering 224 to 236 (KVGHIAARRTGRR) has biased composition (basic residues).

This sequence belongs to the universal ribosomal protein uL2 family. Part of the 50S ribosomal subunit. Forms a bridge to the 30S subunit in the 70S ribosome.

Functionally, one of the primary rRNA binding proteins. Required for association of the 30S and 50S subunits to form the 70S ribosome, for tRNA binding and peptide bond formation. It has been suggested to have peptidyltransferase activity; this is somewhat controversial. Makes several contacts with the 16S rRNA in the 70S ribosome. This is Large ribosomal subunit protein uL2 from Methanospirillum hungatei JF-1 (strain ATCC 27890 / DSM 864 / NBRC 100397 / JF-1).